A 429-amino-acid polypeptide reads, in one-letter code: MMLFSLFLISILHILLVKCQLDTNYEVSDETVSDNNKWAVLVAGSNGYPNYRHQADVCHAYHVLRSKGIKPEHIITMMYDDIAYNLMNPFPGKLFNDYNHKDWYEGVVIDYRGKNVNSKTFLKVLKGDKSAGGKVLKSGKNDDVFIYFTDHGAPGLIAFPDDELYAKEFMSTLKYLHSHKRYSKLVIYIEANESGSMFQQILPSNLSIYATTAANSTECSYSTFCGDPTITTCLADLYSYNWIVDSQTHHLTQRTLDQQYKEVKRETDLSHVQRYGDTRMGKLYVSEFQGSRDKSSSENDEPPMKPRHSIASRDIPLHTLHRQIMMTNNAEDKSFLMQILGLKLKRRDLIEDTMKLIVKVMNNEEIPNTKATIDQTLDCTESVYEQFKSKCFTLQQAPEVGGHFSTLYNYCADGYTAETINEAIIKICG.

The N-terminal stretch at 1-19 (MMLFSLFLISILHILLVKC) is a signal peptide. Residues 20–31 (QLDTNYEVSDET) constitute a propeptide that is removed on maturation. The active site involves His-151. The interval 288–309 (FQGSRDKSSSENDEPPMKPRHS) is disordered. The propeptide occupies 292-429 (RDKSSSENDE…INEAIIKICG (138 aa)).

The protein belongs to the peptidase C13 family.

It carries out the reaction Hydrolysis of proteins and small molecule substrates at -Asn-|-Xaa- bonds.. Its function is as follows. This protease is used by the parasite for degradation of the host globin. The polypeptide is Hemoglobinase (Schistosoma mansoni (Blood fluke)).